We begin with the raw amino-acid sequence, 201 residues long: 3-isopropylmalate dehydratase small subunit (201 aa).

It belongs to the LeuD family. LeuD type 1 subfamily. In terms of assembly, heterodimer of LeuC and LeuD.

It carries out the reaction (2R,3S)-3-isopropylmalate = (2S)-2-isopropylmalate. Its pathway is amino-acid biosynthesis; L-leucine biosynthesis; L-leucine from 3-methyl-2-oxobutanoate: step 2/4. Catalyzes the isomerization between 2-isopropylmalate and 3-isopropylmalate, via the formation of 2-isopropylmaleate. In Shewanella sp. (strain ANA-3), this protein is 3-isopropylmalate dehydratase small subunit.